A 310-amino-acid polypeptide reads, in one-letter code: Olfactory receptor 5P80 (310 aa).

Residues 1-25 (MEPGNYTVVTEVILLGFTEDAIIRA) are Extracellular-facing. The N-linked (GlcNAc...) asparagine glycan is linked to Asn-5. Residues 26-46 (ILFIVFLIIYSVTLMGNASII) traverse the membrane as a helical segment. Residues 47–54 (MLIRRSPQ) lie on the Cytoplasmic side of the membrane. Residues 55-75 (LHTPMYLLLSHLAFVDIGYSS) form a helical membrane-spanning segment. Over 76-99 (SVTPIMLKGFLRKETFILVSGCVA) the chain is Extracellular. Cysteines 97 and 189 form a disulfide. A helical transmembrane segment spans residues 100-120 (QLCSVVTFGSTECFLLAAMAY). The Cytoplasmic segment spans residues 121 to 133 (DRYVAICSPLLYA). A helical membrane pass occupies residues 134–154 (TQMSSTVCILLVGASYLGGCV). Residues 155-196 (NAWTFTGCLLNLSFCRPNKVNHFFCDYSPLLKISCSHDFSSE) are Extracellular-facing. N-linked (GlcNAc...) asparagine glycosylation is present at Asn-165. Residues 197–217 (VIPAISSGSIIVVTVFIIALS) form a helical membrane-spanning segment. At 218–237 (YVYILVSILKMRSTEGRQKA) the chain is on the cytoplasmic side. The chain crosses the membrane as a helical span at residues 238-258 (FSTCTSHLTAVTLFYGTITFI). The Extracellular portion of the chain corresponds to 259-271 (YVMPKSSYSTDQN). A helical transmembrane segment spans residues 272–292 (KVVSVFYTVVIPMLNPIIYSL). The Cytoplasmic portion of the chain corresponds to 293-310 (RNKDVKEAMKKLMANTHH).

It belongs to the G-protein coupled receptor 1 family.

The protein localises to the cell membrane. Functionally, potential odorant receptor. This chain is Olfactory receptor 5P80, found in Mus musculus (Mouse).